The following is a 400-amino-acid chain: Endoglucanase A (400 aa).

The N-terminal stretch at 1 to 32 is a signal peptide; sequence MTKTFKKFSIAGLALLFMATAAFAGWSTKASA. Glu-187 functions as the Proton donor in the catalytic mechanism. Residue Glu-328 is the Nucleophile of the active site.

This sequence belongs to the glycosyl hydrolase 5 (cellulase A) family.

The protein localises to the secreted. It carries out the reaction Endohydrolysis of (1-&gt;4)-beta-D-glucosidic linkages in cellulose, lichenin and cereal beta-D-glucans.. Its activity is regulated as follows. Strongly inhibited by Hg(2+), Ag(+) and Fe(3+). To a lesser extent, is also inhibited by Pb(2+), Mn(2+), Sn(2+) and Cu(2+). By contrast, Ni(2+), Zn(2+), Co(2+), Ba(2+) and NH(4)(+) do not affect enzyme activity, while 10 mM Ca(2+), and Mg(2+) produce a stimulating effect. Is also strongly inhibited by chemicals such as N-bromosuccinimide and dimethyl(2-dihydroxy-5-nitrobenzyl)sulphonium bromide. Is not affected by N-acetylimidazole. In terms of biological role, endoglucanase with high activity on carboxymethylcellulose (CMC) and lichenan, but not active on Avicel. In Paenibacillus barcinonensis, this protein is Endoglucanase A (celA).